Reading from the N-terminus, the 376-residue chain is GDSL esterase/lipase 2 (376 aa).

Residues 1–25 form the signal peptide; that stretch reads MENSRSTLIIFFAYTTIILIGSINC. Asn-36 is a glycosylation site (N-linked (GlcNAc...) asparagine). Ser-46 serves as the catalytic Nucleophile. Residues Asn-186 and Asn-205 are each glycosylated (N-linked (GlcNAc...) asparagine). Active-site residues include Asp-340 and His-343. Asn-362 carries an N-linked (GlcNAc...) asparagine glycan.

This sequence belongs to the 'GDSL' lipolytic enzyme family. As to expression, expressed seedlings, roots and stems.

The protein resides in the secreted. In terms of biological role, involved in the resistance to the necrotropic bacteria Erwinia carotovora, probably via negative regulation of auxin signaling. Possesses lipase and antimicrobial activities, inhibiting germination of fungal spores (e.g. Alternaria brassicicola). This chain is GDSL esterase/lipase 2 (GLIP2), found in Arabidopsis thaliana (Mouse-ear cress).